The sequence spans 483 residues: Glutamate mutase epsilon subunit (483 aa).

Arg-66 is an L-glutamate binding site. Adenosylcob(III)alamin is bound at residue Gly-68. Arg-100 contacts L-glutamate. Asn-123 serves as a coordination point for adenosylcob(III)alamin. Residues 149–150 (RH), Glu-171, and Tyr-177 each bind L-glutamate. Residue Pro-180 participates in adenosylcob(III)alamin binding. Tyr-181 provides a ligand contact to L-glutamate. Adenosylcob(III)alamin contacts are provided by Phe-297, Lys-326, Glu-330, and Ile-334.

Belongs to the methylaspartate mutase GlmE subunit family. As to quaternary structure, heterotetramer composed of 2 epsilon subunits (GlmE) and 2 sigma subunits (GlmS). GlmE exists as a homodimer and GlmS as a monomer. Requires adenosylcob(III)alamin as cofactor.

The enzyme catalyses (2S,3S)-3-methyl-L-aspartate = L-glutamate. It functions in the pathway amino-acid degradation; L-glutamate degradation via mesaconate pathway; acetate and pyruvate from L-glutamate: step 1/4. Its activity is regulated as follows. Competitively inhibited by (2S,4S)-4-fluoroglutamate, 2-methyleneglutarate, (2R,3RS)-3-fluoroglutamate and (S)-3-methylitaconate. In terms of biological role, catalyzes the carbon skeleton rearrangement of L-glutamate to L-threo-3-methylaspartate ((2S,3S)-3-methylaspartate). The sequence is that of Glutamate mutase epsilon subunit from Clostridium cochlearium.